Reading from the N-terminus, the 466-residue chain is MSVVPVADVLQGRVAVDQEVTVRGWVRTRRDSKAGISFLAVYDGSCFDPVQAVINNSLPNYNDDVLHLTTGCSVIVTGVVVASPGQGQSFELQATAIEVTGWVEDPDTYPMAAKRHSIEYLREVAHLRPRTNMIGAVARVRHTLAQALHRFFDEQGYFWVSTPLITASDTEGAGEMFRVSTLDLENLPRTPEGKVDFDKDFFGKEAFLTVSGQLNGETYACALSKIYTFGPTFRAENSNTSRHLAEFWMLEPEVAFANLNDVAGLAEAMLKYVFKAVLEERADDMKFFAERVDSDAVARLERFVSADFAQVDYTDAVAILEKCGEKFENPVYWGVDLSSEHERYLAEKHFKAPVVVKNYPKDIKAFYMRLNEDGKTVAAMDVLAPGIGEIIGGSQREERLDVLDARMEEMGLNPADYSWYRDLRRYGTVPHSGFGLGFERLIAYVTGVQNVRDVIAFPRTPRNASF.

This sequence belongs to the class-II aminoacyl-tRNA synthetase family. As to quaternary structure, homodimer.

The protein localises to the cytoplasm. It catalyses the reaction tRNA(Asn) + L-asparagine + ATP = L-asparaginyl-tRNA(Asn) + AMP + diphosphate + H(+). The sequence is that of Asparagine--tRNA ligase from Enterobacter sp. (strain 638).